Consider the following 407-residue polypeptide: Transmembrane protein 184B (407 aa).

The tract at residues 1-25 is disordered; it reads MTVRGDVLAPDPASPTTAAASPSVS. Residues 9–25 show a composition bias toward low complexity; the sequence is APDPASPTTAAASPSVS. The next 7 helical transmembrane spans lie at 40-60, 84-104, 121-141, 178-198, 214-234, 249-269, and 290-310; these read FLMTTAAQAISGFFVWTALLI, ILFIVPIYAFDSWLSLLFFTN, LVIYNFLSLCYEYLGGESSIM, LQFCVVKPLMAVSTVVLQAFG, VTIIYNISVSLALYALFLFYF, FFMVKSVIFLSFWQGMLLAIL, and VAAGYQDFIICVEMFFAALAL. Residues 369 to 395 are disordered; it reads TLEPGPTWRGGAHGLSRSHSLSGARDN. A phosphoserine mark is found at serine 388, serine 402, and serine 403.

This sequence belongs to the TMEM184 family.

It localises to the membrane. Its function is as follows. May activate the MAP kinase signaling pathway. The protein is Transmembrane protein 184B (TMEM184B) of Homo sapiens (Human).